An 89-amino-acid polypeptide reads, in one-letter code: Small ribosomal subunit protein uS17 (89 aa).

This sequence belongs to the universal ribosomal protein uS17 family. In terms of assembly, part of the 30S ribosomal subunit.

Its function is as follows. One of the primary rRNA binding proteins, it binds specifically to the 5'-end of 16S ribosomal RNA. This Xanthomonas axonopodis pv. citri (strain 306) protein is Small ribosomal subunit protein uS17.